Reading from the N-terminus, the 213-residue chain is MYQDKILVRQLGLQPYEPISQAMHEFTDTRDESTLDEIWLVEHYPVFTQGQAGKAEHILMPGDIPVIQSDRGGQVTYHGPGQQVMYVLLNLKRRKLGVRELVTLLEQTVVNTLAELGIEAHPRADAPGVYVGEKKICSLGLRIRRGCSFHGLALNVNMDLSPFLRINPCGYAGMEMAKISQWKPEATTNNIAPRLLENILALLNNPDFEYITA.

Positions 32–207 constitute a BPL/LPL catalytic domain; sequence ESTLDEIWLV…NILALLNNPD (176 aa). Substrate is bound by residues 71-78, 138-140, and 151-153; these read RGGQVTYH, SLG, and GLA. Cysteine 169 acts as the Acyl-thioester intermediate in catalysis.

Belongs to the LipB family.

The protein localises to the cytoplasm. The enzyme catalyses octanoyl-[ACP] + L-lysyl-[protein] = N(6)-octanoyl-L-lysyl-[protein] + holo-[ACP] + H(+). It functions in the pathway protein modification; protein lipoylation via endogenous pathway; protein N(6)-(lipoyl)lysine from octanoyl-[acyl-carrier-protein]: step 1/2. Its function is as follows. Catalyzes the transfer of endogenously produced octanoic acid from octanoyl-acyl-carrier-protein onto the lipoyl domains of lipoate-dependent enzymes. Lipoyl-ACP can also act as a substrate although octanoyl-ACP is likely to be the physiological substrate. The polypeptide is Octanoyltransferase (Escherichia coli O17:K52:H18 (strain UMN026 / ExPEC)).